The following is a 139-amino-acid chain: Histone H3 (139 aa).

A disordered region spans residues 1-48 (MARTKSTVIARKVTGGKAPRKQIGSKAARKSAAPSNTSGGVKKPHRYK). Lysine 5 bears the N6,N6,N6-trimethyllysine; alternate mark. An N6,N6-dimethyllysine; alternate modification is found at lysine 5. An N6-methyllysine; alternate mark is found at lysine 5 and lysine 12. Lysine 12, lysine 17, lysine 21, lysine 26, lysine 30, and lysine 42 each carry N6-acetyllysine; alternate. Lysine 17 is modified (N6,N6-dimethyllysine; alternate). An N6-methyllysine; alternate mark is found at lysine 21, lysine 26, lysine 30, and lysine 42. N6,N6,N6-trimethyllysine; alternate occurs at positions 30 and 42. Residues lysine 30 and lysine 42 each carry the N6,N6-dimethyllysine; alternate modification. N6-acetyllysine is present on residues lysine 62 and lysine 70. Lysine 85 bears the N6,N6,N6-trimethyllysine; alternate mark. The residue at position 85 (lysine 85) is an N6,N6-dimethyllysine; alternate. At lysine 85 the chain carries N6-methyllysine; alternate.

This sequence belongs to the histone H3 family. As to quaternary structure, the nucleosome is a histone octamer containing two molecules each of H2A, H2B, H3 and H4 assembled in one H3-H4 heterotetramer and two H2A-H2B heterodimers. The octamer wraps approximately 147 bp of DNA. Mono-, di- and trimethylated by the COMPASS complex to form H3K4me1/2/3. H3K4me activates gene expression by regulating transcription elongation and plays a role in telomere length maintenance. H3K4me enrichment correlates with transcription levels, and occurs in a 5' to 3' gradient with H3K4me3 enrichment at the 5'-end of genes, shifting to H3K4me2 and then H3K4me1. Methylated by SET2 to form H3K36me. H3K36me represses gene expression. Methylated by DOT1 to form H3K79me. H3K79me is required for association of SIR proteins with telomeric regions and for telomeric silencing. The COMPASS-mediated formation of H3K4me2/3 and the DOT1-mediated formation of H3K79me require H2BK123ub1. Post-translationally, acetylation of histone H3 leads to transcriptional activation. Acetylated by GCN5 to form H3K14ac. H3K14ac can also be formed by ESA1. H3K56ac formation occurs predominantly in newly synthesized H3 molecules during G1, S and G2/M of the cell cycle and may be involved in DNA repair.

It localises to the nucleus. The protein resides in the chromosome. In terms of biological role, core component of nucleosome. Nucleosomes wrap and compact DNA into chromatin, limiting DNA accessibility to the cellular machineries which require DNA as a template. Histones thereby play a central role in transcription regulation, DNA repair, DNA replication and chromosomal stability. DNA accessibility is regulated via a complex set of post-translational modifications of histones, also called histone code, and nucleosome remodeling. This Yarrowia lipolytica (strain CLIB 122 / E 150) (Yeast) protein is Histone H3 (HHT1).